Reading from the N-terminus, the 142-residue chain is FAD synthase (142 aa).

Residues Val9–Phe10, His14–His17, Asp93, and Tyr120 contribute to the ATP site.

The protein belongs to the archaeal FAD synthase family. As to quaternary structure, homodimer. It depends on a divalent metal cation as a cofactor.

The catalysed reaction is FMN + ATP + H(+) = FAD + diphosphate. The protein operates within cofactor biosynthesis; FAD biosynthesis; FAD from FMN: step 1/1. In terms of biological role, catalyzes the transfer of the AMP portion of ATP to flavin mononucleotide (FMN) to produce flavin adenine dinucleotide (FAD) coenzyme. The sequence is that of FAD synthase (ribL) from Thermoplasma volcanium (strain ATCC 51530 / DSM 4299 / JCM 9571 / NBRC 15438 / GSS1).